Consider the following 396-residue polypeptide: Elongation factor Tu (396 aa).

The region spanning 10–206 (KPHVNVGTIG…ALDSYIPTPE (197 aa)) is the tr-type G domain. A G1 region spans residues 19–26 (GHVDHGKT). Position 19-26 (19-26 (GHVDHGKT)) interacts with GTP. Residue Thr26 participates in Mg(2+) binding. The interval 60–64 (GITIN) is G2. A G3 region spans residues 81-84 (DCPG). GTP is bound by residues 81–85 (DCPGH) and 136–139 (NKCD). The tract at residues 136 to 139 (NKCD) is G4. Residues 174-176 (SAL) form a G5 region.

This sequence belongs to the TRAFAC class translation factor GTPase superfamily. Classic translation factor GTPase family. EF-Tu/EF-1A subfamily. Monomer.

It localises to the cytoplasm. The catalysed reaction is GTP + H2O = GDP + phosphate + H(+). Functionally, GTP hydrolase that promotes the GTP-dependent binding of aminoacyl-tRNA to the A-site of ribosomes during protein biosynthesis. This Aromatoleum aromaticum (strain DSM 19018 / LMG 30748 / EbN1) (Azoarcus sp. (strain EbN1)) protein is Elongation factor Tu.